A 74-amino-acid chain; its full sequence is MKFQYLLAIFMIVLVVTDHCQAFIGMIPGLIGGLISAIKGRRRRQLEARYEPQQRNFRKREIDFEKLFANMPDY.

A signal peptide spans 1–22; sequence MKFQYLLAIFMIVLVVTDHCQA. Lysine 39 is modified (lysine amide; partial). The propeptide occupies 40-74; that stretch reads GRRRRQLEARYEPQQRNFRKREIDFEKLFANMPDY.

This sequence belongs to the non-disulfide-bridged peptide (NDBP) superfamily. Short antimicrobial peptide (group 4) family. As to expression, expressed by the venom gland.

The protein localises to the secreted. It is found in the target cell membrane. In terms of biological role, antimicrobial peptide that probably forms pores in target membranes. Has antibacterial activity against Gram-positive bacteria S.aureus NBRC 13276 (MIC=5-10 uM) and B.subtilis NBRC 3009 (MIC=2.5-5 uM) but not against Gram-negative bacterium E.coli NBRC 3972. The sequence is that of Peptide Im-4 from Isometrus maculatus (Lesser brown scorpion).